Here is a 429-residue protein sequence, read N- to C-terminus: 3-phosphoshikimate 1-carboxyvinyltransferase (429 aa).

Positions 21, 22, and 26 each coordinate 3-phosphoshikimate. Lysine 21 is a binding site for phosphoenolpyruvate. The phosphoenolpyruvate site is built by glycine 94 and arginine 122. Residues serine 167, glutamine 169, aspartate 315, and lysine 342 each contribute to the 3-phosphoshikimate site. Phosphoenolpyruvate is bound at residue glutamine 169. Aspartate 315 serves as the catalytic Proton acceptor. Phosphoenolpyruvate-binding residues include arginine 346 and arginine 388.

Belongs to the EPSP synthase family. Monomer.

Its subcellular location is the cytoplasm. The catalysed reaction is 3-phosphoshikimate + phosphoenolpyruvate = 5-O-(1-carboxyvinyl)-3-phosphoshikimate + phosphate. Its pathway is metabolic intermediate biosynthesis; chorismate biosynthesis; chorismate from D-erythrose 4-phosphate and phosphoenolpyruvate: step 6/7. Functionally, catalyzes the transfer of the enolpyruvyl moiety of phosphoenolpyruvate (PEP) to the 5-hydroxyl of shikimate-3-phosphate (S3P) to produce enolpyruvyl shikimate-3-phosphate and inorganic phosphate. This Desulforamulus reducens (strain ATCC BAA-1160 / DSM 100696 / MI-1) (Desulfotomaculum reducens) protein is 3-phosphoshikimate 1-carboxyvinyltransferase.